The chain runs to 244 residues: rRNA adenine N-6-methyltransferase (244 aa).

6 residues coordinate S-adenosyl-L-methionine: N11, I13, G38, E59, D84, and N101.

This sequence belongs to the class I-like SAM-binding methyltransferase superfamily. rRNA adenine N(6)-methyltransferase family.

The enzyme catalyses adenosine(2085) in 23S rRNA + 2 S-adenosyl-L-methionine = N(6)-dimethyladenosine(2085) in 23S rRNA + 2 S-adenosyl-L-homocysteine + 2 H(+). Functionally, this protein produces a dimethylation of the adenine residue at position 2085 in 23S rRNA, resulting in reduced affinity between ribosomes and macrolide-lincosamide-streptogramin B antibiotics. Is involved in erythromycin resistance. In Limosilactobacillus reuteri (Lactobacillus reuteri), this protein is rRNA adenine N-6-methyltransferase (ermGT).